The following is a 660-amino-acid chain: DNA topoisomerase I, plasmid (660 aa).

One can recognise a Toprim domain in the interval M1–A110. E7 and D79 together coordinate Mg(2+). The region spanning D124 to L550 is the Topo IA-type catalytic domain. The interval S158 to Q163 is interaction with DNA. The active-site O-(5'-phospho-DNA)-tyrosine intermediate is Y287. 2 consecutive C4-type zinc fingers follow at residues C563–C589 and C613–C643.

Belongs to the type IA topoisomerase family. As to quaternary structure, monomer. Mg(2+) serves as cofactor.

The catalysed reaction is ATP-independent breakage of single-stranded DNA, followed by passage and rejoining.. Releases the supercoiling and torsional tension of DNA, which is introduced during the DNA replication and transcription, by transiently cleaving and rejoining one strand of the DNA duplex. Introduces a single-strand break via transesterification at a target site in duplex DNA. The scissile phosphodiester is attacked by the catalytic tyrosine of the enzyme, resulting in the formation of a DNA-(5'-phosphotyrosyl)-enzyme intermediate and the expulsion of a 3'-OH DNA strand. The free DNA strand then undergoes passage around the unbroken strand, thus removing DNA supercoils. Finally, in the religation step, the DNA 3'-OH attacks the covalent intermediate to expel the active-site tyrosine and restore the DNA phosphodiester backbone. This is DNA topoisomerase I, plasmid from Xylella fastidiosa (strain 9a5c).